A 224-amino-acid polypeptide reads, in one-letter code: PKHD-type hydroxylase Shewmr7_0698 (224 aa).

Positions 78-176 (QFYPPLFNRY…RTAAFMWLQS (99 aa)) constitute a Fe2OG dioxygenase domain. Fe cation is bound by residues His96, Asp98, and His157. Position 167 (Arg167) interacts with 2-oxoglutarate.

It depends on Fe(2+) as a cofactor. The cofactor is L-ascorbate.

The chain is PKHD-type hydroxylase Shewmr7_0698 from Shewanella sp. (strain MR-7).